Consider the following 270-residue polypeptide: 4-hydroxy-tetrahydrodipicolinate reductase (270 aa).

Residues 9–14 (GAGGRM) and Glu35 contribute to the NAD(+) site. Arg36 serves as a coordination point for NADP(+). Residues 99-101 (GTT) and 123-126 (ASNF) each bind NAD(+). His156 (proton donor/acceptor) is an active-site residue. Position 157 (His157) interacts with (S)-2,3,4,5-tetrahydrodipicolinate. Lys160 serves as the catalytic Proton donor. 166–167 (GT) provides a ligand contact to (S)-2,3,4,5-tetrahydrodipicolinate.

This sequence belongs to the DapB family.

The protein resides in the cytoplasm. It catalyses the reaction (S)-2,3,4,5-tetrahydrodipicolinate + NAD(+) + H2O = (2S,4S)-4-hydroxy-2,3,4,5-tetrahydrodipicolinate + NADH + H(+). The enzyme catalyses (S)-2,3,4,5-tetrahydrodipicolinate + NADP(+) + H2O = (2S,4S)-4-hydroxy-2,3,4,5-tetrahydrodipicolinate + NADPH + H(+). The protein operates within amino-acid biosynthesis; L-lysine biosynthesis via DAP pathway; (S)-tetrahydrodipicolinate from L-aspartate: step 4/4. Catalyzes the conversion of 4-hydroxy-tetrahydrodipicolinate (HTPA) to tetrahydrodipicolinate. The chain is 4-hydroxy-tetrahydrodipicolinate reductase from Haemophilus influenzae (strain 86-028NP).